Reading from the N-terminus, the 217-residue chain is 3,4-dihydroxy-2-butanone 4-phosphate synthase (217 aa).

Residues 37-38, aspartate 42, 150-154, and glutamate 174 each bind D-ribulose 5-phosphate; these read RE and RGGHT. Glutamate 38 is a binding site for Mg(2+). Histidine 153 provides a ligand contact to Mg(2+).

This sequence belongs to the DHBP synthase family. As to quaternary structure, homodimer. The cofactor is Mg(2+). Requires Mn(2+) as cofactor.

It catalyses the reaction D-ribulose 5-phosphate = (2S)-2-hydroxy-3-oxobutyl phosphate + formate + H(+). It functions in the pathway cofactor biosynthesis; riboflavin biosynthesis; 2-hydroxy-3-oxobutyl phosphate from D-ribulose 5-phosphate: step 1/1. In terms of biological role, catalyzes the conversion of D-ribulose 5-phosphate to formate and 3,4-dihydroxy-2-butanone 4-phosphate. This is 3,4-dihydroxy-2-butanone 4-phosphate synthase from Cronobacter sakazakii (strain ATCC BAA-894) (Enterobacter sakazakii).